A 315-amino-acid chain; its full sequence is 4-hydroxy-3-methylbut-2-enyl diphosphate reductase (315 aa).

Position 12 (cysteine 12) interacts with [4Fe-4S] cluster. The (2E)-4-hydroxy-3-methylbut-2-enyl diphosphate site is built by histidine 43 and histidine 81. Residues histidine 43 and histidine 81 each coordinate dimethylallyl diphosphate. Isopentenyl diphosphate contacts are provided by histidine 43 and histidine 81. [4Fe-4S] cluster is bound at residue cysteine 103. Histidine 131 contributes to the (2E)-4-hydroxy-3-methylbut-2-enyl diphosphate binding site. Histidine 131 is a binding site for dimethylallyl diphosphate. Residue histidine 131 participates in isopentenyl diphosphate binding. Glutamate 133 serves as the catalytic Proton donor. (2E)-4-hydroxy-3-methylbut-2-enyl diphosphate is bound at residue threonine 170. Cysteine 198 lines the [4Fe-4S] cluster pocket. 3 residues coordinate (2E)-4-hydroxy-3-methylbut-2-enyl diphosphate: serine 226, asparagine 228, and serine 271. 3 residues coordinate dimethylallyl diphosphate: serine 226, asparagine 228, and serine 271. Isopentenyl diphosphate is bound by residues serine 226, asparagine 228, and serine 271.

Belongs to the IspH family. Requires [4Fe-4S] cluster as cofactor.

It carries out the reaction isopentenyl diphosphate + 2 oxidized [2Fe-2S]-[ferredoxin] + H2O = (2E)-4-hydroxy-3-methylbut-2-enyl diphosphate + 2 reduced [2Fe-2S]-[ferredoxin] + 2 H(+). The enzyme catalyses dimethylallyl diphosphate + 2 oxidized [2Fe-2S]-[ferredoxin] + H2O = (2E)-4-hydroxy-3-methylbut-2-enyl diphosphate + 2 reduced [2Fe-2S]-[ferredoxin] + 2 H(+). It functions in the pathway isoprenoid biosynthesis; dimethylallyl diphosphate biosynthesis; dimethylallyl diphosphate from (2E)-4-hydroxy-3-methylbutenyl diphosphate: step 1/1. The protein operates within isoprenoid biosynthesis; isopentenyl diphosphate biosynthesis via DXP pathway; isopentenyl diphosphate from 1-deoxy-D-xylulose 5-phosphate: step 6/6. Its function is as follows. Catalyzes the conversion of 1-hydroxy-2-methyl-2-(E)-butenyl 4-diphosphate (HMBPP) into a mixture of isopentenyl diphosphate (IPP) and dimethylallyl diphosphate (DMAPP). Acts in the terminal step of the DOXP/MEP pathway for isoprenoid precursor biosynthesis. The chain is 4-hydroxy-3-methylbut-2-enyl diphosphate reductase from Bacillus cytotoxicus (strain DSM 22905 / CIP 110041 / 391-98 / NVH 391-98).